Here is a 64-residue protein sequence, read N- to C-terminus: Large ribosomal subunit protein bL35 (64 aa).

This sequence belongs to the bacterial ribosomal protein bL35 family.

In Acinetobacter baumannii (strain AB307-0294), this protein is Large ribosomal subunit protein bL35.